The sequence spans 392 residues: MSAEKSKIEHAPWAWGLPVTPPRAAAACAASPWTPRVPADIAQAGGRAGTPRRRAPARTLGHVIFAVPELVEQLVRFVAAGSEQAGAPRALHHCLLVNRLWHAVTVAVLRERLYFADARRLRQFAAAAHRGRLAPELVVLHKLTRLEQRDLDRALQHVSPERLRRLELYVCPRVLPPAGYLGRAGGLRRLALPGNKLVSDDFLIEACVHLPRLQVLDLRACDRVSDAGVVAVATNCPRLHTVNLGRHRNGHLITSVAVVALARHVQLETLGVAGCDVSDAGLWELAAVCGPSLARLSLNNCRYLTNRSVPALLELNAFPNLSVLELRNIPHLTDVRAVVRYRQWKRACGLPVLVEGCDRLTQLFRCEERKLCKENCASPVRDLAAWLRSEED.

It belongs to the AMN1 family.

The protein resides in the cytoplasm. It localises to the nucleus. In terms of biological role, negative regulator of the mitotic exit network (MEN), required for multiple cell cycle checkpoints. Required for daughter cell separation and chromosome stability. Involved in copper sensitivity. The polypeptide is Antagonist of mitotic exit network protein 1 (AMN1) (Eremothecium gossypii (strain ATCC 10895 / CBS 109.51 / FGSC 9923 / NRRL Y-1056) (Yeast)).